The primary structure comprises 460 residues: Cysteine proteinase 7 (460 aa).

A signal peptide spans 1-17 (MKVLSALCVLLVSVATA). Positions 18–111 (KQQLSEVEYR…TESDKIFDAS (94 aa)) are cleaved as a propeptide — activation peptide. Intrachain disulfides connect Cys-131–Cys-176 and Cys-167–Cys-210. Cys-134 is an active-site residue. Residues Asn-226 and Asn-252 are each glycosylated (N-linked (GlcNAc...) asparagine). A disulfide bridge links Cys-268 with Cys-445. His-275 is a catalytic residue. A disordered region spans residues 285-409 (GSGSSGSHGG…GSSSGSNSNG (125 aa)). The segment covering 294–359 (GSQSQSAGSD…QSGSQSGNSG (66 aa)) has biased composition (low complexity). Residues 367-385 (AGSGSGSGSGSGSGSGSGS) are compositionally biased toward gly residues. The segment covering 386–409 (VSGSASGSASGSASGSSSGSNSNG) has biased composition (low complexity). Residue Asn-423 is part of the active site.

The protein belongs to the peptidase C1 family. Glycosylated; contains GlcNAc-alpha-1-P-Ser residues. Also N-glycosylated.

Its subcellular location is the lysosome. The sequence is that of Cysteine proteinase 7 (cprG) from Dictyostelium discoideum (Social amoeba).